A 273-amino-acid polypeptide reads, in one-letter code: Proteasome subunit beta type-7-A (273 aa).

Residues 1 to 37 (MSQSTVDVPPKGGFSFDLCKRNDMLTQKGLKAPSFLK) constitute a propeptide, removed in mature form. Thr-40 functions as the Nucleophile in the catalytic mechanism.

Belongs to the peptidase T1B family. Component of the 20S core complex of the 26S proteasome. The 26S proteasome is composed of a core protease (CP), known as the 20S proteasome, capped at one or both ends by the 19S regulatory particle (RP/PA700). The 20S proteasome core is composed of 28 subunits that are arranged in four stacked rings, resulting in a barrel-shaped structure. The two end rings are each formed by seven alpha subunits, and the two central rings are each formed by seven beta subunits. The catalytic chamber with the active sites is on the inside of the barrel.

It localises to the cytoplasm. The protein localises to the nucleus. It catalyses the reaction Cleavage of peptide bonds with very broad specificity.. In terms of biological role, the proteasome is a multicatalytic proteinase complex which is characterized by its ability to cleave peptides with Arg, Phe, Tyr, Leu, and Glu adjacent to the leaving group at neutral or slightly basic pH. The proteasome has an ATP-dependent proteolytic activity. The protein is Proteasome subunit beta type-7-A (PBB1) of Arabidopsis thaliana (Mouse-ear cress).